The primary structure comprises 455 residues: uncharacterized protein (455 aa).

N-linked (GlcNAc...) asparagine glycans are attached at residues asparagine 42, asparagine 49, and asparagine 70. A run of 4 helical transmembrane segments spans residues 127-147 (AILI…TWIF), 153-173 (SLLD…MFRI), 177-197 (ICAL…ITYY), and 377-397 (YKFC…EIIF). Asparagine 403 is a glycosylation site (N-linked (GlcNAc...) asparagine).

It localises to the membrane. This is an uncharacterized protein from Caenorhabditis elegans.